We begin with the raw amino-acid sequence, 78 residues long: Large ribosomal subunit protein bL28 (78 aa).

The segment at 1–26 (MARVCQVTGKRPMSGHNVSHANNKTK) is disordered.

It belongs to the bacterial ribosomal protein bL28 family.

This Nitrosomonas europaea (strain ATCC 19718 / CIP 103999 / KCTC 2705 / NBRC 14298) protein is Large ribosomal subunit protein bL28.